Here is a 466-residue protein sequence, read N- to C-terminus: NADH-quinone oxidoreductase subunit N (466 aa).

14 helical membrane-spanning segments follow: residues 9–29 (LIPL…GAIV), 33–53 (CGTV…MLAP), 68–88 (PFTR…LLLA), 100–120 (EEYP…ASAA), 122–142 (FLTL…LVAY), 157–177 (LLMG…LYGA), 190–210 (SAAG…GLAF), 232–252 (VVAF…LLIL), 263–283 (APLW…ALLQ), 289–309 (MLAY…LSGG), 314–334 (AAAF…GALA), 359–379 (GVVL…VGFV), 394–416 (APLA…RVVV), and 438–458 (LSLG…GPLF).

It belongs to the complex I subunit 2 family. In terms of assembly, NDH-1 is composed of 14 different subunits. Subunits NuoA, H, J, K, L, M, N constitute the membrane sector of the complex.

The protein resides in the cell inner membrane. The catalysed reaction is a quinone + NADH + 5 H(+)(in) = a quinol + NAD(+) + 4 H(+)(out). NDH-1 shuttles electrons from NADH, via FMN and iron-sulfur (Fe-S) centers, to quinones in the respiratory chain. The immediate electron acceptor for the enzyme in this species is believed to be ubiquinone. Couples the redox reaction to proton translocation (for every two electrons transferred, four hydrogen ions are translocated across the cytoplasmic membrane), and thus conserves the redox energy in a proton gradient. This Geobacter metallireducens (strain ATCC 53774 / DSM 7210 / GS-15) protein is NADH-quinone oxidoreductase subunit N.